Consider the following 200-residue polypeptide: Holliday junction branch migration complex subunit RuvA (200 aa).

A domain I region spans residues 1 to 63 (MYAYVKGKLT…EDAQLLYGFS (63 aa)). The segment at 64–142 (SEEEKDMFLS…ITEEDSDSLL (79 aa)) is domain II. The segment at 143–149 (QVDATST) is flexible linker. The tract at residues 150 to 200 (VQDQFVQEAMLALEALGYSKRELAKVEKTLNKNKYDSVDEAVKAGLQLVVS) is domain III.

Belongs to the RuvA family. In terms of assembly, homotetramer. Forms an RuvA(8)-RuvB(12)-Holliday junction (HJ) complex. HJ DNA is sandwiched between 2 RuvA tetramers; dsDNA enters through RuvA and exits via RuvB. An RuvB hexamer assembles on each DNA strand where it exits the tetramer. Each RuvB hexamer is contacted by two RuvA subunits (via domain III) on 2 adjacent RuvB subunits; this complex drives branch migration. In the full resolvosome a probable DNA-RuvA(4)-RuvB(12)-RuvC(2) complex forms which resolves the HJ.

Its subcellular location is the cytoplasm. The RuvA-RuvB-RuvC complex processes Holliday junction (HJ) DNA during genetic recombination and DNA repair, while the RuvA-RuvB complex plays an important role in the rescue of blocked DNA replication forks via replication fork reversal (RFR). RuvA specifically binds to HJ cruciform DNA, conferring on it an open structure. The RuvB hexamer acts as an ATP-dependent pump, pulling dsDNA into and through the RuvAB complex. HJ branch migration allows RuvC to scan DNA until it finds its consensus sequence, where it cleaves and resolves the cruciform DNA. The chain is Holliday junction branch migration complex subunit RuvA from Staphylococcus aureus (strain USA300).